The following is an 808-amino-acid chain: Bifunctional uridylyltransferase/uridylyl-removing enzyme (808 aa).

Positions 1-315 are uridylyltransferase; the sequence is MEAESPCAAS…ALVRRPKRRP (315 aa). The tract at residues 316–609 is uridylyl-removing; sequence LDEGVVEYAG…EISPRDGERI (294 aa). One can recognise an HD domain in the interval 430 to 544; sequence VDRHVVETAV…LEVLHALSEA (115 aa). 2 consecutive ACT domains span residues 610–686 and 730–805; these read DAVI…GMLQ and ILEV…VDEP.

The protein belongs to the GlnD family. Mg(2+) serves as cofactor.

It catalyses the reaction [protein-PII]-L-tyrosine + UTP = [protein-PII]-uridylyl-L-tyrosine + diphosphate. The enzyme catalyses [protein-PII]-uridylyl-L-tyrosine + H2O = [protein-PII]-L-tyrosine + UMP + H(+). Modifies, by uridylylation and deuridylylation, the PII regulatory protein (GlnB), in response to the nitrogen status of the cell that GlnD senses through the glutamine level. Under low glutamine levels, catalyzes the conversion of the PII protein and UTP to PII-UMP and PPi, while under higher glutamine levels, GlnD hydrolyzes PII-UMP to PII and UMP (deuridylylation). Thus, controls uridylylation state and activity of the PII protein, and plays an important role in the regulation of nitrogen assimilation and metabolism. The chain is Bifunctional uridylyltransferase/uridylyl-removing enzyme from Mycobacterium tuberculosis (strain CDC 1551 / Oshkosh).